A 902-amino-acid chain; its full sequence is Glutamate receptor 4 (902 aa).

An N-terminal signal peptide occupies residues 1–20; that stretch reads MRIICRQIVLLFSGFWGLAM. Residues 22-544 are Extracellular-facing; sequence AFPSSVQIGG…GVFSFLDPLA (523 aa). N-linked (GlcNAc...) asparagine glycosylation is found at Asn-52, Asn-56, Asn-258, Asn-371, Asn-407, and Asn-414. A disulfide bridge links Cys-84 with Cys-331. Positions 500, 502, and 507 each coordinate L-glutamate. A helical membrane pass occupies residues 545-565; that stretch reads YEIWMCIVFAYIGVSVVLFLV. The Cytoplasmic portion of the chain corresponds to 566 to 592; sequence SRFSPYEWHTEEPEDGKEGPSDQPPNE. Positions 593–608 form an intramembrane region, helical; Pore-forming; the sequence is FGIFNSLWFSLGAFMQ. The stretch at 609–611 is an intramembrane region; sequence QGC. A lipid anchor (S-palmitoyl cysteine) is attached at Cys-611. The Cytoplasmic portion of the chain corresponds to 612–617; sequence DISPRS. The helical transmembrane segment at 618–638 threads the bilayer; sequence LSGRIVGGVWWFFTLIIISSY. At 639 to 813 the chain is on the extracellular side; sequence TANLAAFLTV…DKTSALSLSN (175 aa). L-glutamate is bound by residues Ser-676, Thr-677, and Glu-727. A disulfide bridge connects residues Cys-740 and Cys-795. The helical transmembrane segment at 814 to 834 threads the bilayer; that stretch reads VAGVFYILVGGLGLAMLVALI. Over 835 to 902 the chain is Cytoplasmic; it reads EFCYKSRAEA…GLAVIASDLP (68 aa). Residue Cys-837 is the site of S-palmitoyl cysteine attachment. Ser-862 carries the phosphoserine; by PKC/PRKCG modification.

The protein belongs to the glutamate-gated ion channel (TC 1.A.10.1) family. GRIA4 subfamily. In terms of assembly, homotetramer or heterotetramer of pore-forming glutamate receptor subunits. Tetramers may be formed by the dimerization of dimers. Interacts with EPB41L1 via its C-terminus. Isoform 3 interacts with PICK1. Found in a complex with GRIA1, GRIA2, GRIA3, CNIH2, CNIH3, CACNG2, CACNG3, CACNG4, CACNG5, CACNG7 and CACNG8. Interacts with CACNG5 and PRKCG. Found in a complex with GRIA1, GRIA2, GRIA3, DLG4, CACNG8 and CNIH2. Palmitoylated. Depalmitoylated upon L-glutamate stimulation. ZDHHC3/GODZ specifically palmitoylates Cys-611, which leads to Golgi retention and decreased cell surface expression. In contrast, Cys-837 palmitoylation does not affect cell surface expression but regulates stimulation-dependent endocytosis. Post-translationally, phosphorylated at Ser-862 by PRKCG; phosphorylation increases plasma membrane-associated GRI4 expression. In terms of tissue distribution, detected in cerebellum.

It is found in the cell membrane. It localises to the postsynaptic cell membrane. The protein resides in the cell projection. The protein localises to the dendrite. The catalysed reaction is Ca(2+)(in) = Ca(2+)(out). It catalyses the reaction Na(+)(in) = Na(+)(out). The enzyme catalyses Mg(2+)(in) = Mg(2+)(out). Its function is as follows. Ionotropic glutamate receptor that functions as a ligand-gated cation channel, gated by L-glutamate and glutamatergic agonists such as alpha-amino-3-hydroxy-5-methyl-4-isoxazolepropionic acid (AMPA), quisqualic acid, and kainic acid. L-glutamate acts as an excitatory neurotransmitter at many synapses in the central nervous system and plays an important role in fast excitatory synaptic transmission. Binding of the excitatory neurotransmitter L-glutamate induces a conformation change, leading to the opening of the cation channel, and thereby converts the chemical signal to an electrical impulse upon entry of monovalent and divalent cations such as sodium and calcium. The receptor then desensitizes rapidly and enters a transient inactive state, characterized by the presence of bound agonist. In the presence of CACNG8, shows resensitization which is characterized by a delayed accumulation of current flux upon continued application of L-glutamate. The polypeptide is Glutamate receptor 4 (Rattus norvegicus (Rat)).